We begin with the raw amino-acid sequence, 168 residues long: Cysteine-rich perinuclear theca protein 1 (168 aa).

A disordered region spans residues 144-168; that stretch reads NVSDPEEVPPCLDSDPFPNGDLASS.

Specifically expressed in spermatozoa (at protein level). Detected from the elongated spermatid stage onwards; not found in immature germ cells or somatic cells (at protein level).

Its subcellular location is the cytoplasm. The protein localises to the cytoskeleton. It localises to the perinuclear theca. The sequence is that of Cysteine-rich perinuclear theca protein 1 from Mus musculus (Mouse).